The sequence spans 87 residues: Cell division topological specificity factor (87 aa).

This sequence belongs to the MinE family.

Functionally, prevents the cell division inhibition by proteins MinC and MinD at internal division sites while permitting inhibition at polar sites. This ensures cell division at the proper site by restricting the formation of a division septum at the midpoint of the long axis of the cell. The protein is Cell division topological specificity factor of Herpetosiphon aurantiacus (strain ATCC 23779 / DSM 785 / 114-95).